The sequence spans 163 residues: Nucleotide-binding protein Noca_0564 (163 aa).

This sequence belongs to the YajQ family.

Nucleotide-binding protein. The chain is Nucleotide-binding protein Noca_0564 from Nocardioides sp. (strain ATCC BAA-499 / JS614).